The chain runs to 191 residues: Potassium-transporting ATPase KdpC subunit (191 aa).

A helical membrane pass occupies residues 6–26 (PAILLFILLTLVTGGLYPLLT).

The protein belongs to the KdpC family. The system is composed of three essential subunits: KdpA, KdpB and KdpC.

The protein resides in the cell inner membrane. Part of the high-affinity ATP-driven potassium transport (or Kdp) system, which catalyzes the hydrolysis of ATP coupled with the electrogenic transport of potassium into the cytoplasm. This subunit acts as a catalytic chaperone that increases the ATP-binding affinity of the ATP-hydrolyzing subunit KdpB by the formation of a transient KdpB/KdpC/ATP ternary complex. This is Potassium-transporting ATPase KdpC subunit from Enterobacter sp. (strain 638).